A 466-amino-acid chain; its full sequence is Ribulose bisphosphate carboxylase large chain (466 aa).

K5 carries the N6,N6,N6-trimethyllysine modification. 2 residues coordinate substrate: N114 and T164. Residue K166 is the Proton acceptor of the active site. K168 serves as a coordination point for substrate. Positions 192, 194, and 195 each coordinate Mg(2+). Position 192 is an N6-carboxylysine (K192). The Proton acceptor role is filled by H285. Substrate-binding residues include R286, H318, and S370.

Belongs to the RuBisCO large chain family. Type I subfamily. Heterohexadecamer of 8 large chains and 8 small chains; disulfide-linked. The disulfide link is formed within the large subunit homodimers. The cofactor is Mg(2+). Post-translationally, the disulfide bond which can form in the large chain dimeric partners within the hexadecamer appears to be associated with oxidative stress and protein turnover.

The protein resides in the plastid. Its subcellular location is the chloroplast. The enzyme catalyses 2 (2R)-3-phosphoglycerate + 2 H(+) = D-ribulose 1,5-bisphosphate + CO2 + H2O. It carries out the reaction D-ribulose 1,5-bisphosphate + O2 = 2-phosphoglycolate + (2R)-3-phosphoglycerate + 2 H(+). In terms of biological role, ruBisCO catalyzes two reactions: the carboxylation of D-ribulose 1,5-bisphosphate, the primary event in carbon dioxide fixation, as well as the oxidative fragmentation of the pentose substrate in the photorespiration process. Both reactions occur simultaneously and in competition at the same active site. This is Ribulose bisphosphate carboxylase large chain from Berzelia lanuginosa (Buttonbush).